The sequence spans 274 residues: Large ribosomal subunit protein uL2 (274 aa).

The interval 223–274 (VAMNPVDHPHGGGEGRTSGGRHPVTPWGVPTKGYKTRSNKRTDKYIVRRRNK) is disordered.

The protein belongs to the universal ribosomal protein uL2 family. As to quaternary structure, part of the 50S ribosomal subunit. Forms a bridge to the 30S subunit in the 70S ribosome.

One of the primary rRNA binding proteins. Required for association of the 30S and 50S subunits to form the 70S ribosome, for tRNA binding and peptide bond formation. It has been suggested to have peptidyltransferase activity; this is somewhat controversial. Makes several contacts with the 16S rRNA in the 70S ribosome. This chain is Large ribosomal subunit protein uL2, found in Shewanella putrefaciens (strain CN-32 / ATCC BAA-453).